The chain runs to 273 residues: Shikimate dehydrogenase (NADP(+)) (273 aa).

Shikimate contacts are provided by residues 14 to 16 and Thr-61; that span reads SKS. The Proton acceptor role is filled by Lys-65. The shikimate site is built by Asn-86 and Asp-102. Residues 126-130, 150-155, and Met-213 each bind NADP(+); these read GAGGA and NRTVAK. Tyr-215 contacts shikimate. Gly-237 contacts NADP(+).

Belongs to the shikimate dehydrogenase family. As to quaternary structure, homodimer.

It catalyses the reaction shikimate + NADP(+) = 3-dehydroshikimate + NADPH + H(+). It participates in metabolic intermediate biosynthesis; chorismate biosynthesis; chorismate from D-erythrose 4-phosphate and phosphoenolpyruvate: step 4/7. Involved in the biosynthesis of the chorismate, which leads to the biosynthesis of aromatic amino acids. Catalyzes the reversible NADPH linked reduction of 3-dehydroshikimate (DHSA) to yield shikimate (SA). The chain is Shikimate dehydrogenase (NADP(+)) from Tolumonas auensis (strain DSM 9187 / NBRC 110442 / TA 4).